A 502-amino-acid polypeptide reads, in one-letter code: Chromosomal replication initiator protein DnaA (502 aa).

The segment at Met-1 to Ser-112 is domain I, interacts with DnaA modulators. Residues Ser-113–Thr-161 form a domain II region. Residues Ser-162 to Ala-378 are domain III, AAA+ region. ATP is bound by residues Gly-206, Gly-208, Lys-209, and Thr-210. Residues Ser-379–Arg-502 form a domain IV, binds dsDNA region.

The protein belongs to the DnaA family. Oligomerizes as a right-handed, spiral filament on DNA at oriC.

Its subcellular location is the cytoplasm. Functionally, plays an essential role in the initiation and regulation of chromosomal replication. ATP-DnaA binds to the origin of replication (oriC) to initiate formation of the DNA replication initiation complex once per cell cycle. Binds the DnaA box (a 9 base pair repeat at the origin) and separates the double-stranded (ds)DNA. Forms a right-handed helical filament on oriC DNA; dsDNA binds to the exterior of the filament while single-stranded (ss)DNA is stabiized in the filament's interior. The ATP-DnaA-oriC complex binds and stabilizes one strand of the AT-rich DNA unwinding element (DUE), permitting loading of DNA polymerase. After initiation quickly degrades to an ADP-DnaA complex that is not apt for DNA replication. Binds acidic phospholipids. This Mycobacterium leprae (strain TN) protein is Chromosomal replication initiator protein DnaA.